The chain runs to 326 residues: Flap endonuclease 1 (326 aa).

The interval 1-98 (MGVQFGDFIP…KTRKVRREMK (98 aa)) is N-domain. Mg(2+) contacts are provided by Asp-27, Asp-80, Glu-152, Glu-154, Asp-173, Asp-175, and Asp-224. Residues 116–245 (EAAKYAKRVS…KRAYELVRSG (130 aa)) form an I-domain region. An interaction with PCNA region spans residues 317–325 (KQKTLDAWF).

It belongs to the XPG/RAD2 endonuclease family. FEN1 subfamily. As to quaternary structure, interacts with PCNA. PCNA stimulates the nuclease activity without altering cleavage specificity. Mg(2+) serves as cofactor.

Structure-specific nuclease with 5'-flap endonuclease and 5'-3' exonuclease activities involved in DNA replication and repair. During DNA replication, cleaves the 5'-overhanging flap structure that is generated by displacement synthesis when DNA polymerase encounters the 5'-end of a downstream Okazaki fragment. Binds the unpaired 3'-DNA end and kinks the DNA to facilitate 5' cleavage specificity. Cleaves one nucleotide into the double-stranded DNA from the junction in flap DNA, leaving a nick for ligation. Also involved in the base excision repair (BER) pathway. Acts as a genome stabilization factor that prevents flaps from equilibrating into structures that lead to duplications and deletions. Also possesses 5'-3' exonuclease activity on nicked or gapped double-stranded DNA. This is Flap endonuclease 1 from Methanocaldococcus jannaschii (strain ATCC 43067 / DSM 2661 / JAL-1 / JCM 10045 / NBRC 100440) (Methanococcus jannaschii).